The sequence spans 322 residues: Ferredoxin--NADP reductase (322 aa).

Residues Glu37, Gln45, Tyr50, Ile91, Phe128, and Asp290 each coordinate FAD.

This sequence belongs to the ferredoxin--NADP reductase type 2 family. Homodimer. It depends on FAD as a cofactor.

It catalyses the reaction 2 reduced [2Fe-2S]-[ferredoxin] + NADP(+) + H(+) = 2 oxidized [2Fe-2S]-[ferredoxin] + NADPH. The protein is Ferredoxin--NADP reductase of Malacoplasma penetrans (strain HF-2) (Mycoplasma penetrans).